The primary structure comprises 333 residues: Ferrochelatase (333 aa).

The Fe cation site is built by histidine 202 and glutamate 284.

It belongs to the ferrochelatase family.

The protein resides in the cytoplasm. The enzyme catalyses heme b + 2 H(+) = protoporphyrin IX + Fe(2+). It participates in porphyrin-containing compound metabolism; protoheme biosynthesis; protoheme from protoporphyrin-IX: step 1/1. Functionally, catalyzes the ferrous insertion into protoporphyrin IX. The chain is Ferrochelatase from Francisella tularensis subsp. tularensis (strain FSC 198).